Consider the following 96-residue polypeptide: Glutamyl-tRNA(Gln) amidotransferase subunit C (96 aa).

The protein belongs to the GatC family. In terms of assembly, heterotrimer of A, B and C subunits.

It catalyses the reaction L-glutamyl-tRNA(Gln) + L-glutamine + ATP + H2O = L-glutaminyl-tRNA(Gln) + L-glutamate + ADP + phosphate + H(+). The catalysed reaction is L-aspartyl-tRNA(Asn) + L-glutamine + ATP + H2O = L-asparaginyl-tRNA(Asn) + L-glutamate + ADP + phosphate + 2 H(+). Functionally, allows the formation of correctly charged Asn-tRNA(Asn) or Gln-tRNA(Gln) through the transamidation of misacylated Asp-tRNA(Asn) or Glu-tRNA(Gln) in organisms which lack either or both of asparaginyl-tRNA or glutaminyl-tRNA synthetases. The reaction takes place in the presence of glutamine and ATP through an activated phospho-Asp-tRNA(Asn) or phospho-Glu-tRNA(Gln). The sequence is that of Glutamyl-tRNA(Gln) amidotransferase subunit C from Neisseria meningitidis serogroup A / serotype 4A (strain DSM 15465 / Z2491).